A 638-amino-acid polypeptide reads, in one-letter code: Chaperone protein DnaK 2 (638 aa).

Thr-199 carries the post-translational modification Phosphothreonine; by autocatalysis. A disordered region spans residues 604–626 (AKEQAQSAPEGAQEADAAPADDV). Residues 613 to 624 (EGAQEADAAPAD) show a composition bias toward low complexity.

The protein belongs to the heat shock protein 70 family.

Functionally, acts as a chaperone. The chain is Chaperone protein DnaK 2 from Colwellia psychrerythraea (strain 34H / ATCC BAA-681) (Vibrio psychroerythus).